The chain runs to 156 residues: Small ribosomal subunit protein uS7c (156 aa).

This sequence belongs to the universal ribosomal protein uS7 family. Part of the 30S ribosomal subunit.

The protein localises to the plastid. Its subcellular location is the chloroplast. Its function is as follows. One of the primary rRNA binding proteins, it binds directly to 16S rRNA where it nucleates assembly of the head domain of the 30S subunit. This chain is Small ribosomal subunit protein uS7c (rps7), found in Ostreococcus tauri.